A 379-amino-acid chain; its full sequence is 3-dehydroquinate synthase (379 aa).

This sequence belongs to the archaeal-type DHQ synthase family.

The enzyme catalyses 2-amino-2,3,7-trideoxy-D-lyxo-hept-6-ulosonate + NAD(+) + H2O = 3-dehydroquinate + NH4(+) + NADH + H(+). In terms of biological role, catalyzes the oxidative deamination and cyclization of 2-amino-3,7-dideoxy-D-threo-hept-6-ulosonic acid (ADH) to yield 3-dehydroquinate (DHQ), which is fed into the canonical shikimic pathway of aromatic amino acid biosynthesis. This is 3-dehydroquinate synthase from Methanococcoides burtonii (strain DSM 6242 / NBRC 107633 / OCM 468 / ACE-M).